The chain runs to 344 residues: Glycerol-3-phosphate dehydrogenase [NAD(P)+] (344 aa).

NADPH contacts are provided by tryptophan 11, arginine 31, arginine 32, and lysine 105. Sn-glycerol 3-phosphate-binding residues include lysine 105, glycine 133, and serine 135. Residue alanine 137 participates in NADPH binding. Lysine 188, aspartate 241, serine 251, arginine 252, and asparagine 253 together coordinate sn-glycerol 3-phosphate. The Proton acceptor role is filled by lysine 188. Arginine 252 lines the NADPH pocket. Residue glutamate 278 coordinates NADPH.

It belongs to the NAD-dependent glycerol-3-phosphate dehydrogenase family.

Its subcellular location is the cytoplasm. It catalyses the reaction sn-glycerol 3-phosphate + NAD(+) = dihydroxyacetone phosphate + NADH + H(+). It carries out the reaction sn-glycerol 3-phosphate + NADP(+) = dihydroxyacetone phosphate + NADPH + H(+). Its pathway is membrane lipid metabolism; glycerophospholipid metabolism. Functionally, catalyzes the reduction of the glycolytic intermediate dihydroxyacetone phosphate (DHAP) to sn-glycerol 3-phosphate (G3P), the key precursor for phospholipid synthesis. This chain is Glycerol-3-phosphate dehydrogenase [NAD(P)+], found in Acidithiobacillus ferrooxidans (strain ATCC 23270 / DSM 14882 / CIP 104768 / NCIMB 8455) (Ferrobacillus ferrooxidans (strain ATCC 23270)).